Consider the following 189-residue polypeptide: Xanthine phosphoribosyltransferase (189 aa).

Xanthine is bound by residues L20 and N27. 128–132 (ANGKA) contacts 5-phospho-alpha-D-ribose 1-diphosphate. Residue K156 coordinates xanthine.

The protein belongs to the purine/pyrimidine phosphoribosyltransferase family. Xpt subfamily. As to quaternary structure, homodimer.

The protein localises to the cytoplasm. The catalysed reaction is XMP + diphosphate = xanthine + 5-phospho-alpha-D-ribose 1-diphosphate. Its pathway is purine metabolism; XMP biosynthesis via salvage pathway; XMP from xanthine: step 1/1. Functionally, converts the preformed base xanthine, a product of nucleic acid breakdown, to xanthosine 5'-monophosphate (XMP), so it can be reused for RNA or DNA synthesis. The polypeptide is Xanthine phosphoribosyltransferase (Pseudomonas savastanoi pv. phaseolicola (strain 1448A / Race 6) (Pseudomonas syringae pv. phaseolicola (strain 1448A / Race 6))).